Consider the following 1342-residue polypeptide: DNA-directed RNA polymerase subunit beta (1342 aa).

It belongs to the RNA polymerase beta chain family. In terms of assembly, the RNAP catalytic core consists of 2 alpha, 1 beta, 1 beta' and 1 omega subunit. When a sigma factor is associated with the core the holoenzyme is formed, which can initiate transcription.

It carries out the reaction RNA(n) + a ribonucleoside 5'-triphosphate = RNA(n+1) + diphosphate. In terms of biological role, DNA-dependent RNA polymerase catalyzes the transcription of DNA into RNA using the four ribonucleoside triphosphates as substrates. This Wigglesworthia glossinidia brevipalpis protein is DNA-directed RNA polymerase subunit beta.